The chain runs to 381 residues: MKAPIEVSPLAWLDAVEQQRRAAGLRRSLRPRPPVATELDLASNDYLGLSQHPDVIDGGVAALRLWGAGATGSRLVTGDTELHQQFESELADYVGAASGLLFSSGYAANLGAVVGLSGRGALVVSDAYSHASLVDACRLSRARVVVTPHRDVDAVLAALADRDEERAVVITESVFSTDGALAPLRELHEVCRRHRALLIVDEAHGLGVRGGGRGLVFEAGLAGAPDVVMTTTLSKALGSQGGAVLGPAAVRAHLIDAARTFIFDTGLAPAAVGAARAALGVLRAEPWRVGAVLRHAGVLAEVCRVREVPQSAVVSVILGDPDVAVAAATACLDAGVRVGCFRPPTVPAGTSRLRLTARASLDDAELEVARRVLTDVLAGLG.

Substrate is bound at residue Arg27. 105–106 contributes to the pyridoxal 5'-phosphate binding site; the sequence is GY. A substrate-binding site is contributed by His130. Pyridoxal 5'-phosphate-binding positions include Ser176, 201–204, and 232–235; these read DEAH and TLSK. Position 235 is an N6-(pyridoxal phosphate)lysine (Lys235). Residue Thr345 participates in substrate binding.

Belongs to the class-II pyridoxal-phosphate-dependent aminotransferase family. BioF subfamily. Homodimer. Pyridoxal 5'-phosphate serves as cofactor.

It catalyses the reaction 6-carboxyhexanoyl-[ACP] + L-alanine + H(+) = (8S)-8-amino-7-oxononanoate + holo-[ACP] + CO2. It functions in the pathway cofactor biosynthesis; biotin biosynthesis. Functionally, catalyzes the decarboxylative condensation of pimeloyl-[acyl-carrier protein] and L-alanine to produce 8-amino-7-oxononanoate (AON), [acyl-carrier protein], and carbon dioxide. The sequence is that of 8-amino-7-oxononanoate synthase from Mycobacterium avium (strain 104).